The following is a 244-amino-acid chain: S-adenosyl-L-methionine-dependent Diels-Alderase iliD (244 aa).

Belongs to the class I-like SAM-binding methyltransferase superfamily. Erg6/SMT family. It depends on S-adenosyl-L-methionine as a cofactor.

It carries out the reaction 3-[(2E,4E,8S,10E,12Z)-4,8-dimethyltetradeca-2,4,10,12-tetraenoyl]-4-hydroxy-5-(4-hydroxyphenyl)-1,2-dihydropyridin-2-one = ilicicolin H. Its pathway is mycotoxin biosynthesis. S-adenosyl-l-methionine-dependent Diels-Alderase; part of the gene cluster that mediates the biosynthesis of ilicicolin H, a 4-hydroxy-2-pyridonealkaloid that has potent and broad antifungal activities by inhibiting the mitochondrial respiration chain. IliD catalyzes the Diels-Alder reaction that converts the acyclic 2-pyridone intermediate to 8-epi-ilicicolin H. The biosynthesis of ilicicolin H starts with formation of the tetramic acid by the hybrid PKS-NRPS synthetase iliA with the partnering trans-enoyl reductase iliB since iliA lacks a designated enoylreductase (ER) domain. The cytochrome P450 monooxygenase iliC then catalyzes the ring expansion of the tetramate to the acyclic 2-pyridone. The pericyclase iliD further converts the acyclic 2-pyridone into 8-epi-ilicicolin H. 8-epi-ilicicolin H might then spontaneously convert to ilicicolin H since ilicicolin H is produced in the absence of the epimerase iliE, in contrast to what was observed for the Talaromyces variabilis ilicolin H biosynthetic pathway. This chain is S-adenosyl-L-methionine-dependent Diels-Alderase iliD, found in Neonectria sp. (strain DH2).